Here is a 408-residue protein sequence, read N- to C-terminus: LL-diaminopimelate aminotransferase (408 aa).

The substrate site is built by Tyr15 and Gly42. Pyridoxal 5'-phosphate-binding positions include Tyr72, 108–109 (SK), Tyr132, Asn187, Tyr218, and 246–248 (SFS). The substrate site is built by Lys109, Tyr132, and Asn187. The residue at position 249 (Lys249) is an N6-(pyridoxal phosphate)lysine. Pyridoxal 5'-phosphate contacts are provided by Arg257 and Asn291. Residues Asn291 and Arg387 each coordinate substrate.

Belongs to the class-I pyridoxal-phosphate-dependent aminotransferase family. LL-diaminopimelate aminotransferase subfamily. As to quaternary structure, homodimer. Pyridoxal 5'-phosphate serves as cofactor.

It carries out the reaction (2S,6S)-2,6-diaminopimelate + 2-oxoglutarate = (S)-2,3,4,5-tetrahydrodipicolinate + L-glutamate + H2O + H(+). It participates in amino-acid biosynthesis; L-lysine biosynthesis via DAP pathway; LL-2,6-diaminopimelate from (S)-tetrahydrodipicolinate (aminotransferase route): step 1/1. Functionally, involved in the synthesis of meso-diaminopimelate (m-DAP or DL-DAP), required for both lysine and peptidoglycan biosynthesis. Catalyzes the direct conversion of tetrahydrodipicolinate to LL-diaminopimelate. This is LL-diaminopimelate aminotransferase from Prochlorococcus marinus (strain NATL2A).